Consider the following 788-residue polypeptide: Histidine--tRNA ligase, cytoplasmic (788 aa).

The tract at residues 252–286 is disordered; the sequence is PQACEENEAGSSTENPHASGEKPKGDKKSKKKKTL.

Belongs to the class-II aminoacyl-tRNA synthetase family. Homodimer.

It carries out the reaction tRNA(His) + L-histidine + ATP = L-histidyl-tRNA(His) + AMP + diphosphate + H(+). In Oryza sativa subsp. japonica (Rice), this protein is Histidine--tRNA ligase, cytoplasmic.